Here is a 72-residue protein sequence, read N- to C-terminus: DNA-directed RNA polymerase subunit omega (72 aa).

It belongs to the RNA polymerase subunit omega family. In terms of assembly, the RNAP catalytic core consists of 2 alpha, 1 beta, 1 beta' and 1 omega subunit. When a sigma factor is associated with the core the holoenzyme is formed, which can initiate transcription.

It carries out the reaction RNA(n) + a ribonucleoside 5'-triphosphate = RNA(n+1) + diphosphate. In terms of biological role, promotes RNA polymerase assembly. Latches the N- and C-terminal regions of the beta' subunit thereby facilitating its interaction with the beta and alpha subunits. The polypeptide is DNA-directed RNA polymerase subunit omega (Clostridium acetobutylicum (strain ATCC 824 / DSM 792 / JCM 1419 / IAM 19013 / LMG 5710 / NBRC 13948 / NRRL B-527 / VKM B-1787 / 2291 / W)).